We begin with the raw amino-acid sequence, 441 residues long: Chromosome partition protein MukF (441 aa).

Residues 208–236 are leucine-zipper; the sequence is LDETSGNLRELQDTLNAAGDKLQAQLLRI.

This sequence belongs to the MukF family. In terms of assembly, interacts, and probably forms a ternary complex, with MukE and MukB via its C-terminal region. The complex formation is stimulated by calcium or magnesium. It is required for an interaction between MukE and MukB.

The protein resides in the cytoplasm. Its subcellular location is the nucleoid. Involved in chromosome condensation, segregation and cell cycle progression. May participate in facilitating chromosome segregation by condensation DNA from both sides of a centrally located replisome during cell division. Not required for mini-F plasmid partitioning. Probably acts via its interaction with MukB and MukE. Overexpression results in anucleate cells. It has a calcium binding activity. The sequence is that of Chromosome partition protein MukF from Pasteurella multocida (strain Pm70).